Here is a 947-residue protein sequence, read N- to C-terminus: Zinc finger protein 268 (947 aa).

Residues L81 to P152 enclose the KRAB domain. S178 is subject to Phosphoserine; by TBK1. 24 consecutive C2H2-type zinc fingers follow at residues F276–H298, Y304–H326, H332–H354, Y360–H382, Y388–H410, Y416–H438, Y444–H466, Y472–H494, Y500–H522, H528–H550, Y556–H578, Y584–H606, F612–H634, Y640–H662, Y668–H690, Y696–H718, H724–H746, Y752–H774, Y780–H802, Y808–H830, Y836–H858, Y864–H886, Y892–H914, and C920–H942.

This sequence belongs to the krueppel C2H2-type zinc-finger protein family. In terms of assembly, interacts (via the KRAB domain) with TRIM28 (via the RBCC domain); the interaction increases ZNF268 nuclear localization activity. Isoform 2 interacts with CHUK and IKBKB; the interaction is further increased in a TNF-alpha-dependent manner. Interacts with TOLLIP; this interaction is impaired by ZNF268 phosphorylation at Ser-178. Forms a ternary complex with TBK1 and SETD4; the interaction between SETD4 and TBK1 is ZNF268-dependent and leads to TBK1 monomethylation. Phosphorylation at Ser-178 stabilizes the protein by interfering with its binding to TOLLIP, hence impairing its degradation by Tollip-mediated selective autophagy system. As to expression, overexpressed in ovarian cancer tissues compared to normal ovarian tissues. Isoform 1 and isoform 2 are expressed in squamous epithelium tissues. Isoform 2 is overexpressed in squamous cervical cancer (at protein level). Expressed in blood cells. Isoform 1 is expressed in pancreas, lung, skeletal muscle, heart, placenta, liver, kidney and brain. Isoform 2 expressed in chronic lymphocytic leukemia (CLL) and several tumor cell lines. Isoform 3 is expressed in several tumor cells. Isoform 5 is expressed in fetal liver and several tumor cells. Isoform 6 is weakly expressed in brain, lung amd small intestin and in several tumor cells. Isoform 7 is expressed in fetal liver and several tumor cells.

The protein resides in the nucleus. The protein localises to the cytoplasm. Its function is as follows. Acts as a transcriptional repressor. Inhibits erythroid differentiation and tumor cell proliferation. Plays a role during ovarian cancer development and progression. Functionally, contributes to cervical carcinogenesis in part through the TNF-alpha-induced NF-kappa-B signaling pathway by interacting with the I-kappa-B-kinase (IKK) core complex. In terms of biological role, involved in the regulation of antiviral interferon signaling. During viral infection, recruits SETD4 to TBK1, leading to TBK1 monomethylation, which is critical for the assembly of TBK1 complex and IRF3 signaling. The polypeptide is Zinc finger protein 268 (ZNF268) (Homo sapiens (Human)).